The sequence spans 158 residues: NAD(P)H-quinone oxidoreductase subunit J, chloroplastic (158 aa).

Belongs to the complex I 30 kDa subunit family. In terms of assembly, NDH is composed of at least 16 different subunits, 5 of which are encoded in the nucleus.

Its subcellular location is the plastid. It is found in the chloroplast thylakoid membrane. The enzyme catalyses a plastoquinone + NADH + (n+1) H(+)(in) = a plastoquinol + NAD(+) + n H(+)(out). The catalysed reaction is a plastoquinone + NADPH + (n+1) H(+)(in) = a plastoquinol + NADP(+) + n H(+)(out). In terms of biological role, NDH shuttles electrons from NAD(P)H:plastoquinone, via FMN and iron-sulfur (Fe-S) centers, to quinones in the photosynthetic chain and possibly in a chloroplast respiratory chain. The immediate electron acceptor for the enzyme in this species is believed to be plastoquinone. Couples the redox reaction to proton translocation, and thus conserves the redox energy in a proton gradient. In Drimys granadensis, this protein is NAD(P)H-quinone oxidoreductase subunit J, chloroplastic.